A 117-amino-acid polypeptide reads, in one-letter code: Immunoglobulin kappa variable 1-16 (117 aa).

The signal sequence occupies residues 1 to 22 (MDMRVLAQLLGLLLLCFPGARC). Residues 23–45 (DIQMTQSPSSLSASVGDRVTITC) form a framework-1 region. The Ig-like domain occupies 24-117 (IQMTQSPSSL…YYCQQYNSYP (94 aa)). Cysteines 45 and 110 form a disulfide. Residues 46–56 (RASQGISNYLA) form a complementarity-determining-1 region. The segment at 57 to 71 (WFQQKPGKAPKSLIY) is framework-2. The interval 72-78 (AASSLQS) is complementarity-determining-2. The framework-3 stretch occupies residues 79–110 (GVPSKFSGSGSGTDFTLTISSLQPEDFATYYC). The segment at 111–117 (QQYNSYP) is complementarity-determining-3.

Immunoglobulins are composed of two identical heavy chains and two identical light chains; disulfide-linked.

It is found in the secreted. The protein localises to the cell membrane. V region of the variable domain of immunoglobulin light chains that participates in the antigen recognition. Immunoglobulins, also known as antibodies, are membrane-bound or secreted glycoproteins produced by B lymphocytes. In the recognition phase of humoral immunity, the membrane-bound immunoglobulins serve as receptors which, upon binding of a specific antigen, trigger the clonal expansion and differentiation of B lymphocytes into immunoglobulins-secreting plasma cells. Secreted immunoglobulins mediate the effector phase of humoral immunity, which results in the elimination of bound antigens. The antigen binding site is formed by the variable domain of one heavy chain, together with that of its associated light chain. Thus, each immunoglobulin has two antigen binding sites with remarkable affinity for a particular antigen. The variable domains are assembled by a process called V-(D)-J rearrangement and can then be subjected to somatic hypermutations which, after exposure to antigen and selection, allow affinity maturation for a particular antigen. This chain is Immunoglobulin kappa variable 1-16, found in Homo sapiens (Human).